The following is a 294-amino-acid chain: MGDYIVKATAYEDNVLAFAALSKDTVNRAKEIHSLTPTACAALGRSLTAVAMMRTMMKGEKDKVTLVIKGDGPIGSIVVVSNFPGIVKGYVGNPFVDLPLSEKGKLDVGRAVGKKGYVTVIKDIGLKEPYIGTVEIQTGEIGDDIAYYFYTSEQIPSAVGLGVLVGKEGDVLTAGGFILQLLPDVKEEVILKLEKAIGQITSVTDLLRQGKTPEDILTSIFEEEEVKFLEKIPLKYECDCSQERFESAILALGKEEIQKLIKEEQGIETVCHFCGKKYFITRERLEELLKEAEN.

2 cysteine pairs are disulfide-bonded: Cys-238-Cys-240 and Cys-271-Cys-274.

Belongs to the HSP33 family. Post-translationally, under oxidizing conditions two disulfide bonds are formed involving the reactive cysteines. Under reducing conditions zinc is bound to the reactive cysteines and the protein is inactive.

The protein resides in the cytoplasm. Redox regulated molecular chaperone. Protects both thermally unfolding and oxidatively damaged proteins from irreversible aggregation. Plays an important role in the bacterial defense system toward oxidative stress. The chain is 33 kDa chaperonin from Caldanaerobacter subterraneus subsp. tengcongensis (strain DSM 15242 / JCM 11007 / NBRC 100824 / MB4) (Thermoanaerobacter tengcongensis).